Consider the following 477-residue polypeptide: Stromelysin-1 (477 aa).

The signal sequence occupies residues 1 to 17 (MKGLPVLLWLCVVVCSS). A propeptide spans 18–99 (YPLHDSARDD…PRCGVPDVGG (82 aa)) (activation peptide). The short motif at 90-97 (PRCGVPDV) is the Cysteine switch element. Cys-92 contacts Zn(2+). 2 residues coordinate Ca(2+): Asp-124 and Asp-158. 2 residues coordinate Zn(2+): His-168 and Asp-170. Ca(2+) is bound by residues Asp-175, Gly-176, Gly-178, and Val-180. His-183 provides a ligand contact to Zn(2+). Ca(2+) contacts are provided by Gly-190, Asn-192, and Asp-194. Position 196 (His-196) interacts with Zn(2+). Positions 198, 199, and 201 each coordinate Ca(2+). His-218 is a binding site for Zn(2+). Glu-219 is a catalytic residue. Zn(2+) is bound by residues His-222 and His-228. 4 Hemopexin repeats span residues 287-336 (SPMC…WPSL), 337-383 (PSNM…GLPA), 385-433 (VKKI…FPGV), and 434-477 (DSRV…WFNC). Cys-290 and Cys-477 form a disulfide bridge. Asp-297 contributes to the Ca(2+) binding site. Asp-389 and Asp-438 together coordinate Ca(2+).

This sequence belongs to the peptidase M10A family. Ca(2+) serves as cofactor. Zn(2+) is required as a cofactor.

The protein resides in the secreted. It is found in the extracellular space. Its subcellular location is the extracellular matrix. It carries out the reaction Preferential cleavage where P1', P2' and P3' are hydrophobic residues.. In terms of biological role, metalloproteinase with a rather broad substrate specificity that can degrade fibronectin, laminin, gelatins of type I, III, IV, and V; collagens III, IV, X, and IX, and cartilage proteoglycans. Activates different molecules including growth factors, plasminogen or other matrix metalloproteinases such as MMP9. Once released into the extracellular matrix (ECM), the inactive pro-enzyme is activated by the plasmin cascade signaling pathway. Also acts intracellularly. For example, in dopaminergic neurons, gets activated by the serine protease HTRA2 upon stress and plays a pivotal role in DA neuronal degeneration by mediating microglial activation and alpha-synuclein/SNCA cleavage. In addition, plays a role in immune response and possesses antiviral activity against various viruses. Mechanistically, translocates from the cytoplasm into the cell nucleus upon virus infection to influence NF-kappa-B activities. The polypeptide is Stromelysin-1 (Mmp3) (Mus musculus (Mouse)).